The chain runs to 86 residues: Small ribosomal subunit protein bS20 (86 aa).

Over residues 1 to 18 (MANIKSQEKRIRTNERAR) the composition is skewed to basic and acidic residues. The disordered stretch occupies residues 1–25 (MANIKSQEKRIRTNERARLRNQATK).

This sequence belongs to the bacterial ribosomal protein bS20 family.

Binds directly to 16S ribosomal RNA. The protein is Small ribosomal subunit protein bS20 of Mycobacteroides abscessus (strain ATCC 19977 / DSM 44196 / CCUG 20993 / CIP 104536 / JCM 13569 / NCTC 13031 / TMC 1543 / L948) (Mycobacterium abscessus).